The chain runs to 123 residues: Ribosome-binding factor A (123 aa).

Belongs to the RbfA family. In terms of assembly, monomer. Binds 30S ribosomal subunits, but not 50S ribosomal subunits or 70S ribosomes.

The protein localises to the cytoplasm. Functionally, one of several proteins that assist in the late maturation steps of the functional core of the 30S ribosomal subunit. Associates with free 30S ribosomal subunits (but not with 30S subunits that are part of 70S ribosomes or polysomes). Required for efficient processing of 16S rRNA. May interact with the 5'-terminal helix region of 16S rRNA. This Neisseria meningitidis serogroup C (strain 053442) protein is Ribosome-binding factor A.